A 1169-amino-acid polypeptide reads, in one-letter code: Chromosome partition protein Smc (1169 aa).

Residue 32–39 (PNGCGKSN) coordinates ATP. 2 coiled-coil regions span residues 170 to 507 (ISKY…ALGE) and 659 to 1030 (REQQ…FQSL).

The protein belongs to the SMC family. As to quaternary structure, homodimer.

The protein localises to the cytoplasm. Required for chromosome condensation and partitioning. The polypeptide is Chromosome partition protein Smc (Coxiella burnetii (strain RSA 493 / Nine Mile phase I)).